A 124-amino-acid polypeptide reads, in one-letter code: Cytochrome b5-like protein (124 aa).

Residues 5–22 traverse the membrane as a helical segment; sequence YLLILIIIYVIKIICRYF. The 76-residue stretch at 49–124 folds into the Cytochrome b5 heme-binding domain; that stretch reads NQINQVNQVN…ILSKYKITEK (76 aa). Heme-binding residues include His-84 and His-108.

Belongs to the cytochrome b5 family.

The protein localises to the membrane. Functionally, membrane bound hemoprotein which function as an electron carrier for several membrane bound oxygenases. This chain is Cytochrome b5-like protein, found in Acanthamoeba polyphaga (Amoeba).